The primary structure comprises 388 residues: Cell adhesion molecule 4 (388 aa).

Residues 1–20 (MGRARRFQWPLLLLWAAAAG) form the signal peptide. The 99-residue stretch at 21–119 (PGTGQEVQTE…DTHHQIATLT (99 aa)) folds into the Ig-like V-type domain. The Extracellular portion of the chain corresponds to 25–324 (QEVQTENVTV…VEAQTSVPYA (300 aa)). N31 and N67 each carry an N-linked (GlcNAc...) asparagine glycan. 3 cysteine pairs are disulfide-bonded: C44–C104, C145–C199, and C245–C291. 2 Ig-like C2-type domains span residues 124-219 (PENP…YVLD) and 224-307 (PTAR…YVLV). Residue N286 is glycosylated (N-linked (GlcNAc...) asparagine). Residues 325-345 (IVGGILALLVFLIICVLVGMV) traverse the membrane as a helical segment. The Cytoplasmic segment spans residues 346–388 (WCSVRQKGSYLTHEASGLDEQGEAREAFLNGGDGHKRKEEFFI). The residue at position 361 (S361) is a Phosphoserine.

It belongs to the nectin family. Monomer and homodimer. In terms of processing, N-glycosylated. As to expression, expressed in the brain and several organs including the kidney and liver.

Its subcellular location is the membrane. Involved in the cell-cell adhesion. Has calcium- and magnesium-independent cell-cell adhesion activity. May have tumor-suppressor activity. This chain is Cell adhesion molecule 4 (Cadm4), found in Mus musculus (Mouse).